The chain runs to 89 residues: Large ribosomal subunit protein eL34 (89 aa).

Positions 41-69 (RPLNGVPRGRPSELRKLPKTAKRPERPYP) are disordered. Residues 50 to 66 (RPSELRKLPKTAKRPER) are compositionally biased toward basic and acidic residues.

The protein belongs to the eukaryotic ribosomal protein eL34 family.

In Thermococcus gammatolerans (strain DSM 15229 / JCM 11827 / EJ3), this protein is Large ribosomal subunit protein eL34.